A 177-amino-acid chain; its full sequence is Cell division protein ZapC (177 aa).

This sequence belongs to the ZapC family. In terms of assembly, interacts directly with FtsZ.

It localises to the cytoplasm. In terms of biological role, contributes to the efficiency of the cell division process by stabilizing the polymeric form of the cell division protein FtsZ. Acts by promoting interactions between FtsZ protofilaments and suppressing the GTPase activity of FtsZ. This is Cell division protein ZapC from Shewanella frigidimarina (strain NCIMB 400).